A 227-amino-acid chain; its full sequence is Cytochrome c oxidase subunit 2 (227 aa).

Residues 1-14 (MAYPFQLGLQDATS) are Mitochondrial intermembrane-facing. Residues 15 to 45 (PIMEELTNFHDHTLMIVFLISSLVLYIISSM) form a helical membrane-spanning segment. The Mitochondrial matrix segment spans residues 46–59 (LATKMTHTSTMDAQ). Residues 60 to 87 (SMETIWTILPAVILVLIALPSLRILYMM) form a helical membrane-spanning segment. Topologically, residues 88–227 (DEINNPVLTV…FFENWSASMI (140 aa)) are mitochondrial intermembrane. Cu cation contacts are provided by histidine 161, cysteine 196, glutamate 198, cysteine 200, histidine 204, and methionine 207. Mg(2+) is bound at residue glutamate 198.

It belongs to the cytochrome c oxidase subunit 2 family. In terms of assembly, component of the cytochrome c oxidase (complex IV, CIV), a multisubunit enzyme composed of 14 subunits. The complex is composed of a catalytic core of 3 subunits MT-CO1, MT-CO2 and MT-CO3, encoded in the mitochondrial DNA, and 11 supernumerary subunits COX4I, COX5A, COX5B, COX6A, COX6B, COX6C, COX7A, COX7B, COX7C, COX8 and NDUFA4, which are encoded in the nuclear genome. The complex exists as a monomer or a dimer and forms supercomplexes (SCs) in the inner mitochondrial membrane with NADH-ubiquinone oxidoreductase (complex I, CI) and ubiquinol-cytochrome c oxidoreductase (cytochrome b-c1 complex, complex III, CIII), resulting in different assemblies (supercomplex SCI(1)III(2)IV(1) and megacomplex MCI(2)III(2)IV(2)). Found in a complex with TMEM177, COA6, COX18, COX20, SCO1 and SCO2. Interacts with TMEM177 in a COX20-dependent manner. Interacts with COX20. Interacts with COX16. The cofactor is Cu cation.

It is found in the mitochondrion inner membrane. It carries out the reaction 4 Fe(II)-[cytochrome c] + O2 + 8 H(+)(in) = 4 Fe(III)-[cytochrome c] + 2 H2O + 4 H(+)(out). Component of the cytochrome c oxidase, the last enzyme in the mitochondrial electron transport chain which drives oxidative phosphorylation. The respiratory chain contains 3 multisubunit complexes succinate dehydrogenase (complex II, CII), ubiquinol-cytochrome c oxidoreductase (cytochrome b-c1 complex, complex III, CIII) and cytochrome c oxidase (complex IV, CIV), that cooperate to transfer electrons derived from NADH and succinate to molecular oxygen, creating an electrochemical gradient over the inner membrane that drives transmembrane transport and the ATP synthase. Cytochrome c oxidase is the component of the respiratory chain that catalyzes the reduction of oxygen to water. Electrons originating from reduced cytochrome c in the intermembrane space (IMS) are transferred via the dinuclear copper A center (CU(A)) of subunit 2 and heme A of subunit 1 to the active site in subunit 1, a binuclear center (BNC) formed by heme A3 and copper B (CU(B)). The BNC reduces molecular oxygen to 2 water molecules using 4 electrons from cytochrome c in the IMS and 4 protons from the mitochondrial matrix. This chain is Cytochrome c oxidase subunit 2 (MT-CO2), found in Acomys wilsoni (Wilson's spiny mouse).